Consider the following 1523-residue polypeptide: Lysophospholipase nte1 (1523 aa).

Residues 1 to 66 (MADGVTLVDS…LPPVPTTMAG (66 aa)) are Cytoplasmic-facing. A helical transmembrane segment spans residues 67–87 (WIGWVFSFFFQVIPSVLYWVI). At 88–109 (TFSTITLPTWLFTLFSMSLTFT) the chain is on the lumenal side. Residues 110 to 130 (MNFTTLLLIVLAMVSTISWFI) traverse the membrane as a helical segment. Topologically, residues 131–1523 (RYRFLNMYSR…RTMAPRRASI (1393 aa)) are cytoplasmic. Disordered stretches follow at residues 309–384 (VPNS…KSVH) and 524–545 (RAAT…GVSP). The span at 370 to 382 (ESRKHSSRKRRKS) shows a compositional bias: basic residues. A nucleoside 3',5'-cyclic phosphate-binding positions include 681–800 (GGTS…GAVA) and 841–961 (RLTS…IAQR). The PNPLA domain occupies 1220–1384 (LVLGGGGARG…IDNLTVDHMK (165 aa)). The GXGXXG signature appears at 1224 to 1229 (GGGARG). A GXSXG motif is present at residues 1251–1255 (GTSIG). The active-site Nucleophile is Ser-1253. Asp-1371 serves as the catalytic Proton acceptor. Residues 1371 to 1373 (DGG) carry the DGA/G motif. The interval 1502–1523 (LPEETEEKKKLQRTMAPRRASI) is disordered.

It belongs to the NTE family.

It localises to the endoplasmic reticulum membrane. It catalyses the reaction a 1-acyl-sn-glycero-3-phosphocholine + H2O = sn-glycerol 3-phosphocholine + a fatty acid + H(+). Its activity is regulated as follows. Inhibited by organophosphorus esters. Its function is as follows. Intracellular phospholipase B that catalyzes the double deacylation of phosphatidylcholine (PC) to glycerophosphocholine (GroPCho). Plays an important role in membrane lipid homeostasis. Responsible for the rapid PC turnover in response to inositol, elevated temperatures, or when choline is present in the growth medium. This is Lysophospholipase nte1 (nte1) from Neosartorya fischeri (strain ATCC 1020 / DSM 3700 / CBS 544.65 / FGSC A1164 / JCM 1740 / NRRL 181 / WB 181) (Aspergillus fischerianus).